The following is a 267-amino-acid chain: Glutamate racemase (267 aa).

Residues 13-14 and 45-46 each bind substrate; these read DS and YG. Residue C77 is the Proton donor/acceptor of the active site. Substrate is bound at residue 78–79; the sequence is NT. The active-site Proton donor/acceptor is C192. 193–194 is a binding site for substrate; it reads TH.

Belongs to the aspartate/glutamate racemases family.

The catalysed reaction is L-glutamate = D-glutamate. It functions in the pathway cell wall biogenesis; peptidoglycan biosynthesis. Functionally, provides the (R)-glutamate required for cell wall biosynthesis. The sequence is that of Glutamate racemase from Sinorhizobium fredii (strain NBRC 101917 / NGR234).